A 373-amino-acid polypeptide reads, in one-letter code: Histidinol-phosphate aminotransferase (373 aa).

An N6-(pyridoxal phosphate)lysine modification is found at Lys230.

Belongs to the class-II pyridoxal-phosphate-dependent aminotransferase family. Histidinol-phosphate aminotransferase subfamily. Homodimer. Pyridoxal 5'-phosphate is required as a cofactor.

It carries out the reaction L-histidinol phosphate + 2-oxoglutarate = 3-(imidazol-4-yl)-2-oxopropyl phosphate + L-glutamate. The protein operates within amino-acid biosynthesis; L-histidine biosynthesis; L-histidine from 5-phospho-alpha-D-ribose 1-diphosphate: step 7/9. The polypeptide is Histidinol-phosphate aminotransferase (Synechococcus sp. (strain ATCC 27144 / PCC 6301 / SAUG 1402/1) (Anacystis nidulans)).